A 302-amino-acid polypeptide reads, in one-letter code: Porphobilinogen deaminase (302 aa).

An S-(dipyrrolylmethanemethyl)cysteine modification is found at cysteine 234.

It belongs to the HMBS family. In terms of assembly, monomer. Dipyrromethane serves as cofactor.

The enzyme catalyses 4 porphobilinogen + H2O = hydroxymethylbilane + 4 NH4(+). Its pathway is porphyrin-containing compound metabolism; protoporphyrin-IX biosynthesis; coproporphyrinogen-III from 5-aminolevulinate: step 2/4. Functionally, tetrapolymerization of the monopyrrole PBG into the hydroxymethylbilane pre-uroporphyrinogen in several discrete steps. In Corynebacterium glutamicum (strain R), this protein is Porphobilinogen deaminase.